The sequence spans 188 residues: Epididymal-specific lipocalin-5 (188 aa).

A signal peptide spans 1–19 (MENIMPFALLGLCVGLAAG). A disulfide bond links Cys-82 and Cys-176.

This sequence belongs to the calycin superfamily. Lipocalin family. In terms of processing, there are two similar, immunologically cross-reacting forms of this protein, designated B and C, which probably result from different processing of the amino end. Post-translationally, the N-terminus of form C is probably blocked. Synthesized exclusively in the proximal part (caput epididymidis) of the epididymis. It makes up a substantial part of the total protein in the epididymal luminal fluid and binds to the sperm membrane.

It is found in the secreted. In terms of biological role, associates with spermatozoa in the epididymal fluid but does not bind tightly to them. Binds both all-trans and 9-cis retinoic acid. May act as a retinoid carrier protein which is required for epididymal function and/or sperm maturation. The protein is Epididymal-specific lipocalin-5 (Lcn5) of Rattus norvegicus (Rat).